The chain runs to 290 residues: tRNA(Ile)-lysidine synthase, chloroplastic (290 aa).

33–38 (SGGQDS) contacts ATP.

Belongs to the tRNA(Ile)-lysidine synthase family.

It localises to the plastid. Its subcellular location is the chloroplast. It catalyses the reaction cytidine(34) in tRNA(Ile2) + L-lysine + ATP = lysidine(34) in tRNA(Ile2) + AMP + diphosphate + H(+). In terms of biological role, ligates lysine onto the cytidine present at position 34 of the AUA codon-specific tRNA(Ile) that contains the anticodon CAU, in an ATP-dependent manner. Cytidine is converted to lysidine, thus changing the amino acid specificity of the tRNA from methionine to isoleucine. The polypeptide is tRNA(Ile)-lysidine synthase, chloroplastic (Cyanidioschyzon merolae (strain NIES-3377 / 10D) (Unicellular red alga)).